A 362-amino-acid chain; its full sequence is Glutaminase-asparaginase (362 aa).

The N-terminal stretch at 1–25 (MKSALKTFVPGALALLLLFPVAAQA) is a signal peptide. In terms of domain architecture, Asparaginase/glutaminase spans 35 to 362 (ANVVILATGG…KELQRMFWEY (328 aa)). T45 functions as the Acyl-ester intermediate in the catalytic mechanism. Substrate-binding positions include S92 and 125–126 (TD).

The protein belongs to the asparaginase 1 family. Homotetramer.

It localises to the periplasm. The catalysed reaction is L-glutamine + H2O = L-glutamate + NH4(+). The enzyme catalyses L-asparagine + H2O = L-aspartate + NH4(+). The chain is Glutaminase-asparaginase from Pseudomonas fluorescens biotype A.